The chain runs to 60 residues: Large ribosomal subunit protein uL30 (60 aa).

Belongs to the universal ribosomal protein uL30 family. As to quaternary structure, part of the 50S ribosomal subunit.

The chain is Large ribosomal subunit protein uL30 from Streptococcus thermophilus (strain CNRZ 1066).